The sequence spans 1294 residues: CLIP-associating protein 2 (1294 aa).

Positions 1 to 61 are disordered; it reads MAMGDDKSFD…KVGGASKEGG (61 aa). Phosphoserine is present on residues Ser-8 and Ser-14. Gly residues predominate over residues 47 to 61; that stretch reads SAGGPKVGGASKEGG. Positions 60–311 are TOG 1; sequence GGAGAVDEDD…KSLQTYLKSS (252 aa). HEAT repeat units follow at residues 173–208, 209–245, and 250–287; these read HGAE…IRHT, HVPR…EWQT, and RHAA…HFPG. The disordered stretch occupies residues 314–368; sequence VASLPQSDRSSSSSQESLNRPFSSKWSTANPSTVAGRVSAGSSKASSLPGSLQRS. A phosphoserine mark is found at Ser-316, Ser-327, and Ser-330. Low complexity predominate over residues 316–334; the sequence is SLPQSDRSSSSSQESLNRP. 2 stretches are compositionally biased toward polar residues: residues 335-346 and 353-367; these read FSSKWSTANPST and AGSS…SLQR. Phosphoserine occurs at positions 360, 368, 370, and 407. Residues 409 to 467 form a disordered region; the sequence is EDTSDKLDGTASEDGRVRAKLSAPLAGMGNAKADSRGRSRTKMVSQSQPGSRSGSPGRV. Basic and acidic residues predominate over residues 411–425; it reads TSDKLDGTASEDGRV. Residues 444 to 580 form an interaction with microtubules, MAPRE1 and MAPRE3 region; the sequence is RGRSRTKMVS…GPGYGISQSS (137 aa). Positions 453-467 are enriched in low complexity; sequence SQSQPGSRSGSPGRV. Phosphoserine occurs at positions 455, 459, 463, 478, and 489. The segment at 488–557 is disordered; that stretch reads ASAQKRSKIP…PLASRHHSRS (70 aa). Residues 494 to 497 carry the SXIP motif 1; mediates interaction with MAPRE1 and targeting to microtubule plus ends motif; the sequence is SKIP. Ser-507 carries the post-translational modification Phosphoserine. The short motif at 517 to 520 is the SXIP motif 2; mediates interaction with MAPRE1 and targeting to microtubule plus ends element; it reads SRIP. 7 positions are modified to phosphoserine: Ser-525, Ser-529, Ser-585, Ser-587, Ser-596, Ser-621, and Ser-627. Residues 617 to 645 are disordered; that stretch reads YGMHSDDDANSDASSACSERSYSSRNGSI. A compositionally biased stretch (low complexity) spans 627-641; it reads SDASSACSERSYSSR. The interval 649–881 is TOG 2; it reads MRQTEDVAEV…TKLLHNHLRN (233 aa). HEAT repeat units follow at residues 710 to 747 and 772 to 809; these read RVFS…KMGA and LQFN…QMDP. Thr-787 is subject to Phosphothreonine. An interaction with RSN and localization to the Golgi and kinetochores region spans residues 872 to 1294; it reads TKLLHNHLRN…DPTTDVSGQS (423 aa). Disordered stretches follow at residues 878–928 and 952–995; these read HLRN…FDYD and SFRS…DSSQ. Polar residues-rich tracts occupy residues 880 to 892 and 901 to 922; these read RNTG…SMGS and SPAN…TLSP. Ser-892 bears the Phosphoserine mark. 4 positions are modified to phosphoserine: Ser-952, Ser-955, Ser-1013, and Ser-1029. The segment covering 955–972 has biased composition (basic and acidic residues); sequence SQEDMNEPLKRDSKKDDG. Residues 1017–1294 form a required for cortical localization region; it reads RDYNPYNYSD…DPTTDVSGQS (278 aa). 3 HEAT repeats span residues 1054-1091, 1098-1135, and 1216-1253; these read LDHS…TQEE, EHFK…HQPA, and LLLP…VIGD.

This sequence belongs to the CLASP family. As to quaternary structure, interacts with microtubules. Interacts with MAPRE1; probably required for targeting to the growing microtubule plus ends. Interacts with CLIP2, ERC1, MAPRE3, PHLDB2 and RSN. The interaction with ERC1 may be mediated by PHLDB2. Interacts with GCC2; recruits CLASP2 to Golgi membranes. Interacts with MACF1. Interacts with mtcl2 and MTCL1. Post-translationally, phosphorylated by GSK3B. Phosphorylation reduces MAPRE1 binding. Phosphorylation by GSK3B may negatively regulate binding to microtubule lattices in lamella. Brain-specific.

It is found in the cytoplasm. The protein localises to the cytoskeleton. Its subcellular location is the microtubule organizing center. It localises to the centrosome. The protein resides in the chromosome. It is found in the centromere. The protein localises to the kinetochore. Its subcellular location is the spindle. It localises to the golgi apparatus. The protein resides in the trans-Golgi network. It is found in the cell membrane. The protein localises to the cell projection. Its subcellular location is the ruffle membrane. It localises to the cell cortex. In terms of biological role, microtubule plus-end tracking protein that promotes the stabilization of dynamic microtubules. Involved in the nucleation of noncentrosomal microtubules originating from the trans-Golgi network (TGN). Required for the polarization of the cytoplasmic microtubule arrays in migrating cells towards the leading edge of the cell. May act at the cell cortex to enhance the frequency of rescue of depolymerizing microtubules by attaching their plus-ends to cortical platforms composed of ERC1 and PHLDB2. This cortical microtubule stabilizing activity is regulated at least in part by phosphatidylinositol 3-kinase signaling. Also performs a similar stabilizing function at the kinetochore which is essential for the bipolar alignment of chromosomes on the mitotic spindle. Acts as a mediator of ERBB2-dependent stabilization of microtubules at the cell cortex. In Homo sapiens (Human), this protein is CLIP-associating protein 2 (CLASP2).